Consider the following 777-residue polypeptide: Lon protease (777 aa).

Positions 11 to 204 constitute a Lon N-terminal domain; that stretch reads IPVLPLRDVV…FLMAIMESEI (194 aa). Position 356-363 (356-363) interacts with ATP; that stretch reads GPPGVGKT. The 182-residue stretch at 592-773 folds into the Lon proteolytic domain; sequence TNQIGQVIGL…EEVLKLSLEK (182 aa). Catalysis depends on residues S679 and K722.

The protein belongs to the peptidase S16 family. As to quaternary structure, homohexamer. Organized in a ring with a central cavity.

Its subcellular location is the cytoplasm. It catalyses the reaction Hydrolysis of proteins in presence of ATP.. In terms of biological role, ATP-dependent serine protease that mediates the selective degradation of mutant and abnormal proteins as well as certain short-lived regulatory proteins. Required for cellular homeostasis and for survival from DNA damage and developmental changes induced by stress. Degrades polypeptides processively to yield small peptide fragments that are 5 to 10 amino acids long. Binds to DNA in a double-stranded, site-specific manner. This chain is Lon protease, found in Buchnera aphidicola subsp. Acyrthosiphon pisum (strain APS) (Acyrthosiphon pisum symbiotic bacterium).